A 569-amino-acid chain; its full sequence is Proline--tRNA ligase (569 aa).

The protein belongs to the class-II aminoacyl-tRNA synthetase family. ProS type 1 subfamily. As to quaternary structure, homodimer.

It is found in the cytoplasm. It carries out the reaction tRNA(Pro) + L-proline + ATP = L-prolyl-tRNA(Pro) + AMP + diphosphate. Catalyzes the attachment of proline to tRNA(Pro) in a two-step reaction: proline is first activated by ATP to form Pro-AMP and then transferred to the acceptor end of tRNA(Pro). As ProRS can inadvertently accommodate and process non-cognate amino acids such as alanine and cysteine, to avoid such errors it has two additional distinct editing activities against alanine. One activity is designated as 'pretransfer' editing and involves the tRNA(Pro)-independent hydrolysis of activated Ala-AMP. The other activity is designated 'posttransfer' editing and involves deacylation of mischarged Ala-tRNA(Pro). The misacylated Cys-tRNA(Pro) is not edited by ProRS. The chain is Proline--tRNA ligase from Nitratiruptor sp. (strain SB155-2).